The chain runs to 366 residues: MKRLKKLTREPGVFFRDYFNKKYPVRNIEQRINEIEEPAIIANSLHLAAVESAIHLSPFKIDVVFTWVDNSDTQWQQRHQQYCHAASPNNLYSNDETRFANHNELYYSLHSVRSFLPWVNHIYIITDSQTPKWFKSAEYPNVSIIDHSEIIDKQYLPTFNSHVIEAHLHNIPNLSEHFIYFNDDVFVARPLHREHFFHANGIASLFIADKSLQKMATKGTITPTLSASQNCIRLLNQRYDCNLDHPLVHTYVPLRKSGFQTAWQYYREEIKAFLPNKFRTNQDLNLATFLVPWLMYLDGKSIPNNDICYYFNIRSNKAPTQYLKLLQKNEDNQQPHSFCANDFHSEQQLYDYHAKLIAMLKDYFKI.

This sequence belongs to the stealth family.

This is Capsular polysaccharide phosphotransferase LcbA (lcbA) from Neisseria meningitidis.